The primary structure comprises 141 residues: Large ribosomal subunit protein uL11 (141 aa).

Belongs to the universal ribosomal protein uL11 family. In terms of assembly, part of the ribosomal stalk of the 50S ribosomal subunit. Interacts with L10 and the large rRNA to form the base of the stalk. L10 forms an elongated spine to which L12 dimers bind in a sequential fashion forming a multimeric L10(L12)X complex. In terms of processing, one or more lysine residues are methylated.

Forms part of the ribosomal stalk which helps the ribosome interact with GTP-bound translation factors. The polypeptide is Large ribosomal subunit protein uL11 (Clostridium botulinum (strain Kyoto / Type A2)).